The sequence spans 265 residues: Flap endonuclease Xni (265 aa).

Residue Asp-111 participates in Mg(2+) binding. The 5'-3' exonuclease domain maps to 167 to 260 (VVPAQLVDFW…NLREIRYPPA (94 aa)). Leu-178, Val-189, and Ile-192 together coordinate K(+). The interaction with DNA stretch occupies residues 191–196 (GIGPKT).

It belongs to the Xni family. Mg(2+) is required as a cofactor. Requires K(+) as cofactor.

Has flap endonuclease activity. During DNA replication, flap endonucleases cleave the 5'-overhanging flap structure that is generated by displacement synthesis when DNA polymerase encounters the 5'-end of a downstream Okazaki fragment. In Aeromonas salmonicida (strain A449), this protein is Flap endonuclease Xni.